The chain runs to 559 residues: Potassium-transporting ATPase potassium-binding subunit (559 aa).

12 consecutive transmembrane segments (helical) span residues 6–26 (FLLIASFLLLLFLLARPLGNV), 63–83 (LLAILLLNVFGLFVLFAMLML), 131–151 (VGLTVQNFLSAASGIAVIFAL), 173–193 (ITLWVLLPISLVIALFFIQQG), 253–273 (FVQMLAIFLIPAALCFAFGDV), 283–303 (LLWAMSLIFVVCAALVMWAEW), 327–347 (FGILASSLYAVVTTAASCGAV), 356–376 (ALGGMIPLWLMQIGEVVFGGV), 379–399 (GLYGMLLFVLLAVFIAGLMIG), 416–436 (LTALAILVTPALVLMGTALAL), 484–504 (LLAFCMFVGRFGVIVPVMAIA), and 524–544 (GALFVGLLIGTVLLVGALTFI).

Belongs to the KdpA family. In terms of assembly, the system is composed of three essential subunits: KdpA, KdpB and KdpC.

It localises to the cell inner membrane. Part of the high-affinity ATP-driven potassium transport (or Kdp) system, which catalyzes the hydrolysis of ATP coupled with the electrogenic transport of potassium into the cytoplasm. This subunit binds the periplasmic potassium ions and delivers the ions to the membrane domain of KdpB through an intramembrane tunnel. The chain is Potassium-transporting ATPase potassium-binding subunit from Enterobacter sp. (strain 638).